The following is a 998-amino-acid chain: Mis18-binding protein 1 (998 aa).

Residue lysine 7 forms a Glycyl lysine isopeptide (Lys-Gly) (interchain with G-Cter in SUMO2) linkage. Residues serine 9, serine 109, and serine 134 each carry the phosphoserine modification. The segment at 122-153 (QRDKQEQLTRSSSMLGSPQGEHTKDFPPNTDK) is disordered. Over residues 142–153 (EHTKDFPPNTDK) the composition is skewed to basic and acidic residues. Phosphoserine is present on residues serine 169 and serine 258. Residues 336-422 (VHLQEWMIKV…MFGFPHNWKE (87 aa)) enclose the SANTA domain. Disordered stretches follow at residues 438–460 (KTRQETARVQEKQKSKKKDAEDK) and 476–502 (DNSLERTEVPTDPLNSLEQPTSGKERR). Over residues 488 to 497 (PLNSLEQPTS) the composition is skewed to polar residues. Phosphothreonine is present on residues threonine 516 and threonine 578. Phosphoserine occurs at positions 638 and 639. The segment at 638–660 (SSEENEVEIKSRTRARNTKERLN) is disordered. The span at 644 to 660 (VEIKSRTRARNTKERLN) shows a compositional bias: basic and acidic residues. Threonine 688 is subject to Phosphothreonine. A Glycyl lysine isopeptide (Lys-Gly) (interchain with G-Cter in SUMO2) cross-link involves residue lysine 707. At serine 726 the chain carries Phosphoserine. An SANT domain is found at 741-796 (TDDEEWSEQELQKLHCAFTSLPKHKPGFWSDVAMAVGSRTADECQKKYTEEPQGQG). Lysine 765 is covalently cross-linked (Glycyl lysine isopeptide (Lys-Gly) (interchain with G-Cter in SUMO2)). Positions 784–821 (CQKKYTEEPQGQGSRKHGSKKKQANKVQNGEKDSADAK) are disordered. The span at 797–807 (SRKHGSKKKQA) shows a compositional bias: basic residues. Over residues 812–821 (NGEKDSADAK) the composition is skewed to basic and acidic residues. Glycyl lysine isopeptide (Lys-Gly) (interchain with G-Cter in SUMO2) cross-links involve residues lysine 821, lysine 828, and lysine 847. At serine 872 the chain carries Phosphoserine. Lysine 948 is covalently cross-linked (Glycyl lysine isopeptide (Lys-Gly) (interchain with G-Cter in SUMO2)). A phosphoserine mark is found at serine 955 and serine 985. The tract at residues 976-998 (SKYFIDDTESDEEEKDYYFSNSD) is disordered. Over residues 981 to 990 (DDTESDEEEK) the composition is skewed to acidic residues.

In terms of assembly, interacts with SP1. Interacts with MIS18A. Identified in a complex containing MIS18A, OIP5/MIS18B, MIS18BP1, RBBP7 and RBBP4. Interacts with KAT7/HBO1. Interacts (via N-terminus) with FLNA (via N-terminus).

The protein localises to the nucleus. Its subcellular location is the chromosome. It localises to the centromere. Required for recruitment of CENPA to centromeres and normal chromosome segregation during mitosis. In Mus musculus (Mouse), this protein is Mis18-binding protein 1 (Mis18bp1).